Here is a 560-residue protein sequence, read N- to C-terminus: Membrane protein insertase YidC (560 aa).

The next 6 helical transmembrane spans lie at 5–25 (IINLIAAIILSLSIIFGWQYF), 334–354 (AIDFGWFYIITKPVFYAMNFF), 357–377 (YVGNFGVSILIVTVIIKLLMF), 431–451 (LPILVQIPVFFSIYKVLYVTI), 476–496 (LFGLLPFAPPSFLMIGAWPIL), and 522–542 (FMPLIFLFMFSSFPVGLLIYW).

This sequence belongs to the OXA1/ALB3/YidC family. Type 1 subfamily. As to quaternary structure, interacts with the Sec translocase complex via SecD. Specifically interacts with transmembrane segments of nascent integral membrane proteins during membrane integration.

The protein localises to the cell inner membrane. In terms of biological role, required for the insertion and/or proper folding and/or complex formation of integral membrane proteins into the membrane. Involved in integration of membrane proteins that insert both dependently and independently of the Sec translocase complex, as well as at least some lipoproteins. Aids folding of multispanning membrane proteins. The chain is Membrane protein insertase YidC from Rickettsia rickettsii (strain Iowa).